Reading from the N-terminus, the 536-residue chain is Zinc finger protein 394 (536 aa).

Residues alanine 18–lysine 45 are disordered. Lysine 20 participates in a covalent cross-link: Glycyl lysine isopeptide (Lys-Gly) (interchain with G-Cter in SUMO2). Over residues proline 26–glutamate 41 the composition is skewed to polar residues. The SCAN box domain maps to arginine 44–leucine 126. The 62-residue stretch at alanine 135–serine 196 folds into the KRAB domain. Glycyl lysine isopeptide (Lys-Gly) (interchain with G-Cter in SUMO2) cross-links involve residues lysine 207 and lysine 260. 3 C2H2-type zinc fingers span residues tyrosine 328 to histidine 350, tyrosine 356 to histidine 378, and tyrosine 384 to histidine 406. The segment at cysteine 412–histidine 433 adopts a C2H2-type 4; atypical zinc-finger fold. Residue lysine 413 forms a Glycyl lysine isopeptide (Lys-Gly) (interchain with G-Cter in SUMO2) linkage. 3 C2H2-type zinc fingers span residues histidine 439–histidine 461, tyrosine 467–histidine 489, and tyrosine 495–histidine 517.

This sequence belongs to the krueppel C2H2-type zinc-finger protein family.

The protein localises to the nucleus. Its function is as follows. May be involved in transcriptional regulation. The protein is Zinc finger protein 394 (Znf394) of Rattus norvegicus (Rat).